A 239-amino-acid polypeptide reads, in one-letter code: BURP domain-containing protein 6 (239 aa).

The first 19 residues, 1 to 19 (MPGAIRDLINPVSSAASAS), serve as a signal peptide directing secretion. Residues 28–239 (FFLEKDLFPG…PQDDMLWVRN (212 aa)) enclose the BURP domain.

As to expression, expressed in leaves and shoot.

The protein is BURP domain-containing protein 6 (BURP6) of Oryza sativa subsp. japonica (Rice).